The sequence spans 302 residues: Putative peptide permease protein BOV_A0350 (302 aa).

Residues 1–22 (MRSSIHASRLRKMGQSIPASTG) are disordered. 6 consecutive transmembrane segments (helical) span residues 38 to 58 (IFGL…PLWL), 101 to 121 (LLVA…IGAI), 147 to 167 (IFLL…VVVI), 200 to 222 (AGLG…VVYA), 230 to 250 (ILLE…AASW), and 268 to 288 (WQWL…NFIG). Residues 97 to 288 (GRISLLVAVS…LAVLAINFIG (192 aa)) form the ABC transmembrane type-1 domain.

The protein belongs to the binding-protein-dependent transport system permease family. In terms of assembly, the complex is composed of two ATP-binding proteins (BOV_A0347 and BOV_A0348), two transmembrane proteins (BOV_A0350 and BOV_A0351) and a solute-binding protein (BOV_A0352).

The protein resides in the cell inner membrane. Probably part of an ABC transporter complex that could be involved in peptide import. Probably responsible for the translocation of the substrate across the membrane. This is Putative peptide permease protein BOV_A0350 from Brucella ovis (strain ATCC 25840 / 63/290 / NCTC 10512).